The sequence spans 305 residues: MSSLVRPINLGKINHSQSTVKDYILLMKPRVMSLVIFTGFVGMWLAPYSVHPFIAGIAVVCIALGAGSAGAINMWYDRDIDSLMKRTQKRPIVRGVIESDEALSFGLITGFFAVFFMALCVNLLASFLLLFTIFYYICIYTIWLKRRSIQNIVIGGVSGALPPVIGYAAVSNTISLESIILFLIIFIWTPPHSWALALFCNDDYKNCKVPMMPAVKGTLYTKKQILIYSILLFIVSLMPFFIGMNNFIYLIISGILGVVFLYYAGSLFYDTPDNKQAKRFFAYSIFYLFFIFLLLYSTNTISTIS.

Helical transmembrane passes span V31–H51, P52–I72, V96–A118, L123–K145, N151–S171, I179–F199, I225–N245, F247–L267, and F281–I301.

The protein belongs to the UbiA prenyltransferase family. Protoheme IX farnesyltransferase subfamily.

The protein resides in the cell membrane. The catalysed reaction is heme b + (2E,6E)-farnesyl diphosphate + H2O = Fe(II)-heme o + diphosphate. Its pathway is porphyrin-containing compound metabolism; heme O biosynthesis; heme O from protoheme: step 1/1. In terms of biological role, converts heme B (protoheme IX) to heme O by substitution of the vinyl group on carbon 2 of heme B porphyrin ring with a hydroxyethyl farnesyl side group. This chain is Protoheme IX farnesyltransferase, found in Rickettsia africae (strain ESF-5).